The following is a 944-amino-acid chain: Putative alpha,alpha-trehalose-phosphate synthase [UDP-forming] 106 kDa subunit (944 aa).

Positions 73–84 are enriched in polar residues; sequence TNAQSNIATPSP. Disordered regions lie at residues 73–113 and 129–166; these read TNAQ…NSLS and SKNDGTNLSLPPSRHQSPPPSSVLASQRHHRRHDSELE. The segment covering 101-113 has biased composition (low complexity); that stretch reads PSSDSPSLENSLS. Phosphoserine is present on residues Ser-141, Ser-145, Ser-149, Ser-150, Ser-163, and Ser-177. A glycosyltransferase region spans residues 173–652; it reads SRSLSFSMNG…AVTFQSLIKE (480 aa). Position 189 is a phosphothreonine (Thr-189).

It in the N-terminal section; belongs to the glycosyltransferase 20 family.

The enzyme catalyses D-glucose 6-phosphate + UDP-alpha-D-glucose = alpha,alpha-trehalose 6-phosphate + UDP + H(+). The polypeptide is Putative alpha,alpha-trehalose-phosphate synthase [UDP-forming] 106 kDa subunit (Schizosaccharomyces pombe (strain 972 / ATCC 24843) (Fission yeast)).